The chain runs to 161 residues: Small ribosomal subunit protein uS9 (161 aa).

Belongs to the universal ribosomal protein uS9 family.

In Rickettsia typhi (strain ATCC VR-144 / Wilmington), this protein is Small ribosomal subunit protein uS9.